The primary structure comprises 382 residues: N-acetyldiaminopimelate deacetylase (382 aa).

Residue Asp73 is part of the active site. Residue Glu132 is the Proton acceptor of the active site.

This sequence belongs to the peptidase M20A family. N-acetyldiaminopimelate deacetylase subfamily.

The catalysed reaction is N-acetyl-(2S,6S)-2,6-diaminopimelate + H2O = (2S,6S)-2,6-diaminopimelate + acetate. It functions in the pathway amino-acid biosynthesis; L-lysine biosynthesis via DAP pathway; LL-2,6-diaminopimelate from (S)-tetrahydrodipicolinate (acetylase route): step 3/3. Catalyzes the conversion of N-acetyl-diaminopimelate to diaminopimelate and acetate. The protein is N-acetyldiaminopimelate deacetylase of Oenococcus oeni (strain ATCC BAA-331 / PSU-1).